A 323-amino-acid polypeptide reads, in one-letter code: Tetraacyldisaccharide 4'-kinase (323 aa).

Position 56–63 (56–63) interacts with ATP; the sequence is TVGGVGKT.

Belongs to the LpxK family.

The catalysed reaction is a lipid A disaccharide + ATP = a lipid IVA + ADP + H(+). It participates in glycolipid biosynthesis; lipid IV(A) biosynthesis; lipid IV(A) from (3R)-3-hydroxytetradecanoyl-[acyl-carrier-protein] and UDP-N-acetyl-alpha-D-glucosamine: step 6/6. Transfers the gamma-phosphate of ATP to the 4'-position of a tetraacyldisaccharide 1-phosphate intermediate (termed DS-1-P) to form tetraacyldisaccharide 1,4'-bis-phosphate (lipid IVA). The sequence is that of Tetraacyldisaccharide 4'-kinase from Legionella pneumophila (strain Lens).